The sequence spans 38 residues: Defensin-like peptide 3 (38 aa).

Intrachain disulfides connect Cys-6–Cys-36 and Cys-13–Cys-29.

Produced by the crural gland and detected in venom from the spur located on each male hind leg.

It localises to the secreted. Functionally, does not show antimicrobial, myotoxic, hemolytic and cell-promoting activities. The chain is Defensin-like peptide 3 from Ornithorhynchus anatinus (Duckbill platypus).